The following is an 876-amino-acid chain: Valine--tRNA ligase (876 aa).

Residues 44–54 (PNVTGKLHLGH) carry the 'HIGH' region motif. The 'KMSKS' region signature appears at 520–524 (KMSKS). Lys523 is a binding site for ATP. Positions 805–876 (LEGLIDMDKE…VKARIEQLKA (72 aa)) form a coiled coil.

The protein belongs to the class-I aminoacyl-tRNA synthetase family. ValS type 1 subfamily. In terms of assembly, monomer.

Its subcellular location is the cytoplasm. The catalysed reaction is tRNA(Val) + L-valine + ATP = L-valyl-tRNA(Val) + AMP + diphosphate. Its function is as follows. Catalyzes the attachment of valine to tRNA(Val). As ValRS can inadvertently accommodate and process structurally similar amino acids such as threonine, to avoid such errors, it has a 'posttransfer' editing activity that hydrolyzes mischarged Thr-tRNA(Val) in a tRNA-dependent manner. This chain is Valine--tRNA ligase, found in Staphylococcus carnosus (strain TM300).